Here is a 418-residue protein sequence, read N- to C-terminus: Protein MAEA homolog (418 aa).

The LisH domain maps to 141–173; that stretch reads NNTKLKRILVDYMLRMSYFETATKLSESSNIMD. Residues 179–236 enclose the CTLH domain; sequence IFREAKKVIDALKNREVASALTWCADNKTRLKKSKSKFEFQLRLQEFIELVRVDTAES. Residues 330 to 403 form an RING-Gid-type zinc finger; that stretch reads CTKEDPLSQE…NGGKITCPRT (74 aa).

In terms of assembly, interacts with RANBPM.

It is found in the cytoplasm. This Arabidopsis thaliana (Mouse-ear cress) protein is Protein MAEA homolog.